We begin with the raw amino-acid sequence, 351 residues long: Dihydroorotate dehydrogenase (quinone) (351 aa).

FMN is bound by residues 61–65 (AGLDK) and threonine 85. A substrate-binding site is contributed by lysine 65. A substrate-binding site is contributed by 110–114 (NRMGF). FMN contacts are provided by asparagine 139 and asparagine 172. Asparagine 172 serves as a coordination point for substrate. The Nucleophile role is filled by serine 175. Asparagine 177 is a binding site for substrate. Residues lysine 217 and threonine 245 each coordinate FMN. 246–247 (NT) contributes to the substrate binding site. Residues glycine 268, glycine 297, and 318 to 319 (YS) each bind FMN.

Belongs to the dihydroorotate dehydrogenase family. Type 2 subfamily. As to quaternary structure, monomer. It depends on FMN as a cofactor.

The protein resides in the cell membrane. The enzyme catalyses (S)-dihydroorotate + a quinone = orotate + a quinol. It participates in pyrimidine metabolism; UMP biosynthesis via de novo pathway; orotate from (S)-dihydroorotate (quinone route): step 1/1. Its function is as follows. Catalyzes the conversion of dihydroorotate to orotate with quinone as electron acceptor. The protein is Dihydroorotate dehydrogenase (quinone) of Stenotrophomonas maltophilia (strain K279a).